Here is a 434-residue protein sequence, read N- to C-terminus: uncharacterized protein (434 aa).

Residues 1-17 (MTFLLFQLLVLLRYSIG) form the signal peptide. 12 helical membrane-spanning segments follow: residues 48–68 (AAIS…FTVL), 70–90 (EWVY…SVTA), 112–132 (YRVA…FTIF), 141–161 (TYGT…NAVV), 173–193 (WITG…RLVT), 206–226 (YGVH…TSFV), 232–252 (YCGL…LSGL), 271–291 (EGVY…HLGY), 305–325 (TSSI…TILF), 344–364 (WVLA…YIPL), 380–400 (ATFL…DTIF), and 404–424 (FSSL…IGTI).

Its subcellular location is the membrane. This is an uncharacterized protein from Arabidopsis thaliana (Mouse-ear cress).